Here is a 486-residue protein sequence, read N- to C-terminus: Arginine/agmatine antiporter (486 aa).

The next 12 helical transmembrane spans lie at 12–32 (LGAIALAGMVISSMIGGGIFS), 41–61 (AGVGAIILAWILTGVGMFFIA), 85–105 (GFGPYIGFTIGWGYWLCQIFG), 132–152 (PAILGGSILIWVFNFIVLKGI), 160–180 (IIGTVGKLVPLIVFIIITAFL), 211–231 (STMLVTLWAFIGIEGAVVMSA), 242–262 (ATILGFTGCLTVYILLSILPF), 296–316 (VGLLIAVLSSWLSWTMIVAEI), 341–361 (VSLYVTSALMQIAMLLVYFST), 367–387 (MLSITGVMVLPAYFASAAFLV), 418–438 (IWLIYAGGLKYLLMAIILLAL), and 461–481 (EVTEITIIAFLALLAIFLFST).

The protein belongs to the amino acid-polyamine-organocation (APC) superfamily. Basic amino acid/polyamine antiporter (APA) (TC 2.A.3.2) family.

It localises to the cell inner membrane. Functionally, catalyzes the exchange of L-arginine for agmatine. The arginine uptake by the bacterium in the macrophage may be a virulence factor against the host innate immune response. This chain is Arginine/agmatine antiporter (aaxC), found in Chlamydia abortus (strain DSM 27085 / S26/3) (Chlamydophila abortus).